The primary structure comprises 503 residues: ATP synthase subunit alpha (503 aa).

Position 169-176 (169-176) interacts with ATP; sequence GDRKTGKT.

It belongs to the ATPase alpha/beta chains family. F-type ATPases have 2 components, CF(1) - the catalytic core - and CF(0) - the membrane proton channel. CF(1) has five subunits: alpha(3), beta(3), gamma(1), delta(1), epsilon(1). CF(0) has three main subunits: a(1), b(2) and c(9-12). The alpha and beta chains form an alternating ring which encloses part of the gamma chain. CF(1) is attached to CF(0) by a central stalk formed by the gamma and epsilon chains, while a peripheral stalk is formed by the delta and b chains.

Its subcellular location is the cell membrane. The catalysed reaction is ATP + H2O + 4 H(+)(in) = ADP + phosphate + 5 H(+)(out). Its function is as follows. Produces ATP from ADP in the presence of a proton gradient across the membrane. The alpha chain is a regulatory subunit. This Lactobacillus johnsonii (strain CNCM I-12250 / La1 / NCC 533) protein is ATP synthase subunit alpha.